The primary structure comprises 355 residues: 45 kDa calcium-binding protein (355 aa).

The signal sequence occupies residues 1–29 (MASRQGPLCGLAPCCLWLLGVILLMNASA). Asn-26 carries N-linked (GlcNAc...) asparagine glycosylation. EF-hand domains follow at residues 91 to 126 (KSRRKLMVIFSKVDLNTDRRISAKEMQKWIMQKTAE) and 130 to 165 (EAVAESRAHFRAVDPDGDGHVSWDEYKVKFLATKGH). A Phosphoserine modification is found at Ser-92. Ca(2+)-binding residues include Asp-104, Asn-106, Asp-108, Arg-110, Glu-115, Asp-143, Asp-145, Asp-147, His-149, and Glu-154. A phosphothreonine mark is found at Thr-186 and Thr-210. EF-hand domains are found at residues 226–261 (MLQFMVKEIIRDLDQDGDKKLSLSEFISLPVGTVEN), 271–306 (WVRDRKREFEELIDANHDGIVTMAELEDYMDPMNEF), and 307–342 (SALNEAKQMIAIADENQNHYLEPEEVLKYSEFFTGS). Ca(2+) contacts are provided by Asp-239, Asp-241, Asp-243, Lys-245, and Glu-250. Residue Thr-258 is modified to Phosphothreonine. Asp-284, Asn-286, and Asp-288 together coordinate Ca(2+). Thr-292 carries the post-translational modification Phosphothreonine. The Ca(2+) site is built by Glu-295, Asp-320, Asn-322, Asn-324, Tyr-326, and Glu-331. A necessary for intracellular retention in Golgi apparatus lumen region spans residues 302 to 355 (PMNEFSALNEAKQMIAIADENQNHYLEPEEVLKYSEFFTGSKLVDYARSVHEEF).

The protein belongs to the CREC family.

The protein localises to the golgi apparatus lumen. Its function is as follows. May regulate calcium-dependent activities in the endoplasmic reticulum lumen or post-ER compartment. In Capra hircus (Goat), this protein is 45 kDa calcium-binding protein (SDF4).